We begin with the raw amino-acid sequence, 1096 residues long: DNA-directed RNA polymerase subunit beta (1096 aa).

This sequence belongs to the RNA polymerase beta chain family. As to quaternary structure, in plastids the minimal PEP RNA polymerase catalytic core is composed of four subunits: alpha, beta, beta', and beta''. When a (nuclear-encoded) sigma factor is associated with the core the holoenzyme is formed, which can initiate transcription.

It is found in the plastid. It localises to the chloroplast. The enzyme catalyses RNA(n) + a ribonucleoside 5'-triphosphate = RNA(n+1) + diphosphate. In terms of biological role, DNA-dependent RNA polymerase catalyzes the transcription of DNA into RNA using the four ribonucleoside triphosphates as substrates. The polypeptide is DNA-directed RNA polymerase subunit beta (Guillardia theta (Cryptophyte)).